The chain runs to 146 residues: 3-dehydroquinate dehydratase (146 aa).

Catalysis depends on Y24, which acts as the Proton acceptor. Residues N73, H79, and D86 each contribute to the substrate site. The active-site Proton donor is the H99. Residues 100–101 (LS) and R110 each bind substrate.

This sequence belongs to the type-II 3-dehydroquinase family. Homododecamer.

It catalyses the reaction 3-dehydroquinate = 3-dehydroshikimate + H2O. The protein operates within metabolic intermediate biosynthesis; chorismate biosynthesis; chorismate from D-erythrose 4-phosphate and phosphoenolpyruvate: step 3/7. Functionally, catalyzes a trans-dehydration via an enolate intermediate. This is 3-dehydroquinate dehydratase from Shewanella baltica (strain OS223).